Reading from the N-terminus, the 400-residue chain is Enoyl-[acyl-carrier-protein] reductase [NADH] (400 aa).

Residues 48 to 53, 74 to 75, 111 to 112, and 139 to 140 contribute to the NAD(+) site; these read GSSSGY, FE, DA, and LA. Position 225 (tyrosine 225) interacts with substrate. Tyrosine 235 functions as the Proton donor in the catalytic mechanism. NAD(+) is bound by residues lysine 244 and 273 to 275; that span reads VVT.

It belongs to the TER reductase family. In terms of assembly, monomer.

The catalysed reaction is a 2,3-saturated acyl-[ACP] + NAD(+) = a (2E)-enoyl-[ACP] + NADH + H(+). It functions in the pathway lipid metabolism; fatty acid biosynthesis. Involved in the final reduction of the elongation cycle of fatty acid synthesis (FAS II). Catalyzes the reduction of a carbon-carbon double bond in an enoyl moiety that is covalently linked to an acyl carrier protein (ACP). The sequence is that of Enoyl-[acyl-carrier-protein] reductase [NADH] from Shewanella piezotolerans (strain WP3 / JCM 13877).